A 171-amino-acid chain; its full sequence is Cytochrome c oxidase subunit 4 isoform 2, mitochondrial (171 aa).

The transit peptide at 1-28 (MLPRAAWSLVLRKGGGGRRGMHSSEGTT) directs the protein to the mitochondrion. The disordered stretch occupies residues 13 to 32 (KGGGGRRGMHSSEGTTRGGG). Over 29–100 (RGGGKMSPYT…TFAEMNRRSN (72 aa)) the chain is Mitochondrial matrix. The chain crosses the membrane as a helical span at residues 101-126 (EWKTVMGCVFFFIGFAALVIWWQRVY). Topologically, residues 127–171 (VFPPKPITLTDERKAQQLQRMLDMKVNPVQGLASRWDYEKKQWKK) are mitochondrial intermembrane.

This sequence belongs to the cytochrome c oxidase IV family. As to quaternary structure, component of the cytochrome c oxidase (complex IV, CIV), a multisubunit enzyme composed of 14 subunits. The complex is composed of a catalytic core of 3 subunits MT-CO1, MT-CO2 and MT-CO3, encoded in the mitochondrial DNA, and 11 supernumerary subunits COX4I1 (or COX4I2), COX5A, COX5B, COX6A1 (or COX6A2), COX6B1 (or COX6B2), COX6C, COX7A2 (or COX7A1), COX7B, COX7C, COX8A and NDUFA4, which are encoded in the nuclear genome. The complex exists as a monomer or a dimer and forms supercomplexes (SCs) in the inner mitochondrial membrane with NADH-ubiquinone oxidoreductase (complex I, CI) and ubiquinol-cytochrome c oxidoreductase (cytochrome b-c1 complex, complex III, CIII), resulting in different assemblies (supercomplex SCI(1)III(2)IV(1) and megacomplex MCI(2)III(2)IV(2)). As to expression, highly expressed in lung.

The protein localises to the mitochondrion inner membrane. It functions in the pathway energy metabolism; oxidative phosphorylation. Functionally, component of the cytochrome c oxidase, the last enzyme in the mitochondrial electron transport chain which drives oxidative phosphorylation. The respiratory chain contains 3 multisubunit complexes succinate dehydrogenase (complex II, CII), ubiquinol-cytochrome c oxidoreductase (cytochrome b-c1 complex, complex III, CIII) and cytochrome c oxidase (complex IV, CIV), that cooperate to transfer electrons derived from NADH and succinate to molecular oxygen, creating an electrochemical gradient over the inner membrane that drives transmembrane transport and the ATP synthase. Cytochrome c oxidase is the component of the respiratory chain that catalyzes the reduction of oxygen to water. Electrons originating from reduced cytochrome c in the intermembrane space (IMS) are transferred via the dinuclear copper A center (CU(A)) of subunit 2 and heme A of subunit 1 to the active site in subunit 1, a binuclear center (BNC) formed by heme A3 and copper B (CU(B)). The BNC reduces molecular oxygen to 2 water molecules using 4 electrons from cytochrome c in the IMS and 4 protons from the mitochondrial matrix. This is Cytochrome c oxidase subunit 4 isoform 2, mitochondrial from Homo sapiens (Human).